The following is a 261-amino-acid chain: Neurexophilin-2 (261 aa).

Residues 1–22 form the signal peptide; it reads MSLRPLPLLVVPGLLQLLFCDS. The segment at 23–87 is II; sequence EEVIHNTESV…WDWLANITEI (65 aa). 4 N-linked (GlcNAc...) asparagine glycosylation sites follow: Asn83, Asn136, Asn146, and Asn152. An III region spans residues 88–166; that stretch reads QEQLARTKRR…LVPPSKVVEF (79 aa). Residues 167–175 are IV (linker domain); the sequence is EISPQSTLE. Positions 176–261 are v (Cys-rich); that stretch reads TKESKSFNCH…HSETPYLSFG (86 aa).

This sequence belongs to the neurexophilin family. In terms of processing, may be proteolytically processed at the boundary between the N-terminal non-conserved and the central conserved domain in neuron-like cells.

The protein localises to the secreted. May be signaling molecules that resemble neuropeptides and that act by binding to alpha-neurexins and possibly other receptors. In Mus musculus (Mouse), this protein is Neurexophilin-2 (Nxph2).